Consider the following 103-residue polypeptide: Potassium voltage-gated channel subfamily E member 3 (103 aa).

N-linked (GlcNAc...) asparagine glycans are attached at residues Asn5, Asn22, and Asn41. The disordered stretch occupies residues 32–53; that stretch reads RPGPGLGPDNQTEERRASLPGR. Residues 43–53 show a composition bias toward basic and acidic residues; that stretch reads TEERRASLPGR. A helical transmembrane segment spans residues 57-77; it reads SYMYILFVMFLFAVTVGSLIL. Positions 68 to 79 are interaction with KCNQ1; it reads FAVTVGSLILGY. The Cytoplasmic portion of the chain corresponds to 78 to 103; sequence GYTRSRKVDKRSDPYHVYIKNRVSMI.

Belongs to the potassium channel KCNE family. In terms of assembly, interacts with KCNB1. Interacts with KCNC2. Associates with KCNC4/Kv3.4. Interacts with KCNQ1; associates with a KCNQ1:KCNE3 stoichiometry of 4:4; produces a current with nearly instantaneous activation with a linear current-voltage relationship and alters membrane raft localization; affects KCNQ1 structure and gating properties. As to expression, expressed in hippocampal neurons (at protein level). Widely expressed with highest levels in kidney and moderate levels in small intestine.

It is found in the cell membrane. It localises to the cytoplasm. Its subcellular location is the perikaryon. The protein resides in the cell projection. The protein localises to the dendrite. It is found in the membrane raft. Functionally, ancillary protein that functions as a regulatory subunit of the voltage-gated potassium (Kv) channel complex composed of pore-forming and potassium-conducting alpha subunits and of regulatory beta subunits. KCNE3 beta subunit modulates the gating kinetics and enhances stability of the channel complex. Alters the gating of the delayed rectifier Kv channel containing KCNB1 alpha subunit. Associates with KCNC4/Kv3.4 alpha subunit to form the subthreshold Kv channel in skeletal muscle and to establish the resting membrane potential (RMP) in muscle cells. Association with KCNQ1/KCLQT1 alpha subunit may form the intestinal cAMP-stimulated potassium channel involved in chloride secretion that produces a current with nearly instantaneous activation with a linear current-voltage relationship. In Homo sapiens (Human), this protein is Potassium voltage-gated channel subfamily E member 3.